The following is a 312-amino-acid chain: Porphobilinogen deaminase (312 aa).

C241 is modified (S-(dipyrrolylmethanemethyl)cysteine).

Belongs to the HMBS family. In terms of assembly, monomer. Dipyrromethane is required as a cofactor.

The catalysed reaction is 4 porphobilinogen + H2O = hydroxymethylbilane + 4 NH4(+). The protein operates within porphyrin-containing compound metabolism; protoporphyrin-IX biosynthesis; coproporphyrinogen-III from 5-aminolevulinate: step 2/4. Functionally, tetrapolymerization of the monopyrrole PBG into the hydroxymethylbilane pre-uroporphyrinogen in several discrete steps. This Cytophaga hutchinsonii (strain ATCC 33406 / DSM 1761 / CIP 103989 / NBRC 15051 / NCIMB 9469 / D465) protein is Porphobilinogen deaminase.